We begin with the raw amino-acid sequence, 869 residues long: DNA mismatch repair protein MutS (869 aa).

618-625 (GPNMGGKS) contributes to the ATP binding site.

The protein belongs to the DNA mismatch repair MutS family.

This protein is involved in the repair of mismatches in DNA. It is possible that it carries out the mismatch recognition step. This protein has a weak ATPase activity. In Zymomonas mobilis subsp. mobilis (strain ATCC 31821 / ZM4 / CP4), this protein is DNA mismatch repair protein MutS.